The primary structure comprises 281 residues: 2-dehydro-3-deoxyphosphooctonate aldolase (281 aa).

Belongs to the KdsA family.

Its subcellular location is the cytoplasm. It carries out the reaction D-arabinose 5-phosphate + phosphoenolpyruvate + H2O = 3-deoxy-alpha-D-manno-2-octulosonate-8-phosphate + phosphate. It functions in the pathway carbohydrate biosynthesis; 3-deoxy-D-manno-octulosonate biosynthesis; 3-deoxy-D-manno-octulosonate from D-ribulose 5-phosphate: step 2/3. Its pathway is bacterial outer membrane biogenesis; lipopolysaccharide biosynthesis. This is 2-dehydro-3-deoxyphosphooctonate aldolase from Marinobacter nauticus (strain ATCC 700491 / DSM 11845 / VT8) (Marinobacter aquaeolei).